We begin with the raw amino-acid sequence, 3242 residues long: tRNA nuclease CdiA (3242 aa).

Positions 1–32 (MHQPPVRFTYRLLSYLISTIIAGQPLLPAVGA) are cleaved as a signal peptide. A two-partner system transport domain (TPS) region spans residues 36–322 (PQNGAGMDKA…AGGNLSVTGT (287 aa)). The FHA-1 stretch occupies residues 351 to 1376 (GELTAGQNAM…IVVRTGHLLN (1026 aa)). The interval 1377–1668 (QREGFSATTT…TGQTGISDDW (292 aa)) is receptor-binding domain (RBD). The tract at residues 1668 to 1852 (WPLPSGNNGY…LSPEDITLHN (185 aa)) is YP domain. Positions 1853 to 1913 (GSVISGNNVQ…DLSAIGDISN (61 aa)) are periplasmic FHA-1 repeat (pFR). The tract at residues 2021-2631 (DNSASSTTSQ…TSKYDSKQTS (611 aa)) is FHA-2. Residues 2075–2091 (RESKNSRNGRSESHESH) are compositionally biased toward basic and acidic residues. 3 disordered regions span residues 2075–2094 (RESK…HAAV), 2310–2333 (GSSK…STIG), and 2439–2481 (TMAS…NAGN). The segment covering 2322 to 2333 (GTTQSQSASTIG) has biased composition (polar residues). The tract at residues 2969-3242 (GVDPSKLTED…IESALKGYGI (274 aa)) is DUF638-CT domain; not toxic when added to the outside of E.coli, does not interfere with F-pilus mediated conjugation, toxic when expressed intracellularly. The interval 2972-3015 (PSKLTEDQKQTVSTLATLSAGMAGGIASGDVAGAAAGAGAGKNV) is pre-toxin (PT) domain. The VENN CT cleavage motif motif lies at 3016-3019 (VENN). The segment at 3016-3097 (VENNALSLVA…KYLSSLHDKY (82 aa)) is toxin import domain; sufficient to import the tRNA nuclease domain of colicin E5 into E.coli, may bind F-pili. The CT domain; toxic when added to the outside of E.coli and when expressed intracellularly stretch occupies residues 3016–3242 (VENNALSLVA…IESALKGYGI (227 aa)). The interval 3020 to 3141 (ALSLVARGCA…SENDPKQQNE (122 aa)) is inner membrane translocation domain (IMTD), targets protein to FtsH. Residues 3020 to 3242 (ALSLVARGCA…IESALKGYGI (223 aa)) form a C-terminal effector domain (CT) region. Residues 3098 to 3242 (GSGAASNPNI…IESALKGYGI (145 aa)) form a tRNase function, does not interfere with F-pilus mediated conjugation region. The tract at residues 3116 to 3146 (KVELGGSGSGTGTPPPSENDPKQQNEKTVDK) is disordered. A compositionally biased stretch (basic and acidic residues) spans 3134-3146 (NDPKQQNEKTVDK). A coiled-coil region spans residues 3137 to 3238 (KQQNEKTVDK…AINKIESALK (102 aa)). Residues aspartate 3170, histidine 3193, and glutamate 3196 contribute to the active site.

This sequence in the N-terminal section; belongs to the CdiA toxin family. In terms of assembly, the C-terminal (CT) domain interacts with cognate CdiI but not non-cognate CdiI from D.dadantii strain 3937. CdiA-CT also interacts with CysK; this is blocked upon preincubation with O-acetyl-L-serine. CysK forms a complex with CdiA-CT/CdiI. One CdiA toxin subunit binds to each subunit of the CysK homodimer, and one CdiI immunity protein binds to each toxin subunit; the immune complex is thus a dimer of trimers. The 4 C-terminal residues of CdiA fit into the active site of CysK. A divalent metal cation is required as a cofactor.

It localises to the secreted. It is found in the target cell membrane. The protein resides in the target cell. The protein localises to the target cell cytoplasm. Its function is as follows. Toxic component of a toxin-immunity protein module, which functions as a cellular contact-dependent growth inhibition (CDI) system. CDI modules allow bacteria to communicate with and inhibit the growth of closely related neighboring bacteria in a contact-dependent fashion (target cell counts decrease 100- to 1000-fold). CdiA toxicity is neutralized by its cognate immunity protein CdiI, but not by CdiI from other bacteria. Uses heterotrimeric OmpC and OmpF as target cell outer membrane receptors; receptor function depends on polymorphisms in extracellular loops L4 and L5 of OmpC; interacts with itself and closely related bacteria but also with OmpC from E.cloacae ATCC 13047. Its ability to preferentially bind to 'self' receptors suggests it may also play a role in self-recognition and kin selection. A bamA mutation that decreases its expression about 5-fold is partially resistant to this strain of CdiA, probably due to decreased outer membrane receptor protein assembly. Isolated CdiA-CT is imported in an F-pilus-mediated fashion; CdiA-CT inhibits F-mediated conjugation, probably via its N-terminus (residues 3016-3097), although it is not clear if this is physiologically significant. Gains access to the cytoplasm of target cells by using integral inner membrane protein FtsH. The C-terminal domain (CT) cleaves within tRNA anticodon loops; this activity is inhibited by cognate CdiI. tRNase activity of CdiA-CT is stimulated by CysK, although the extreme C-terminus (residues 3098-3242) has tRNase activity in the absence of CysK. In vivo CDI toxicity requires CysK. CysK stabilizes CdiA-CT, allowing it to bind tRNA substrate; neither CdiA-CT nor CysK bind tRNA alone in vitro. Purified CdiA-CT (residues 3016-3242) inhibits E.coli cell growth when added to cultures alone or in complex with cognate CdiI, growth is inhibited when cognate CdiI is present within the cell but not when a CdiA-CT/CdiI complex is added extracellularly, suggesting CdiA-CT alone but not the CdiA-CT/CdiI complex is imported into the target cell. Functionally, the CdiA protein is thought to be exported from the cell through the central lumen of CdiB, the other half of its two-partner system (TPS). The TPS domain probably remains associated with CdiB while the FHA-1 domain forms an extended filament with the receptor-binding domain (RBD) at its extremity; in the secretion arrested state the C-terminus of the RBD and YP domains form a hairpin-like structure as the FHA-2, PT and CT domains are periplasmic. The YP domain is probably responsible for this arrest at the point where it re-enters the host cell periplasm. Upon binding to a target cell outer membrane receptor (heterotrimeric OmpC-OmpF for this CDI) a signal is transmitted to activate secretion. The filament elongates slightly, the rest of CdiA is secreted and the FHA-2 domain becomes stably associated with the target cell's outer membrane where it facilitates entry of the toxic CT domain into the target cell periplasm. From there the toxic CT domain is cleaved and gains access to the target cell cytoplasm via an inner membrane protein (FtsH for this CDI). This Escherichia coli O6:K15:H31 (strain 536 / UPEC) protein is tRNA nuclease CdiA.